A 185-amino-acid polypeptide reads, in one-letter code: ATP-dependent protease subunit HslV (185 aa).

Threonine 13 is an active-site residue. Na(+)-binding residues include glycine 167, cysteine 170, and threonine 173.

Belongs to the peptidase T1B family. HslV subfamily. In terms of assembly, a double ring-shaped homohexamer of HslV is capped on each side by a ring-shaped HslU homohexamer. The assembly of the HslU/HslV complex is dependent on binding of ATP.

The protein resides in the cytoplasm. The enzyme catalyses ATP-dependent cleavage of peptide bonds with broad specificity.. Its activity is regulated as follows. Allosterically activated by HslU binding. In terms of biological role, protease subunit of a proteasome-like degradation complex believed to be a general protein degrading machinery. The sequence is that of ATP-dependent protease subunit HslV from Sinorhizobium fredii (strain NBRC 101917 / NGR234).